Reading from the N-terminus, the 475-residue chain is Glycogen synthase (475 aa).

Residue Lys-15 coordinates ADP-alpha-D-glucose.

This sequence belongs to the glycosyltransferase 1 family. Bacterial/plant glycogen synthase subfamily.

It catalyses the reaction [(1-&gt;4)-alpha-D-glucosyl](n) + ADP-alpha-D-glucose = [(1-&gt;4)-alpha-D-glucosyl](n+1) + ADP + H(+). It functions in the pathway glycan biosynthesis; glycogen biosynthesis. Functionally, synthesizes alpha-1,4-glucan chains using ADP-glucose. This is Glycogen synthase from Anaeromyxobacter sp. (strain Fw109-5).